We begin with the raw amino-acid sequence, 467 residues long: Fumarate hydratase class II (467 aa).

Residues 99–101, 130–133, 140–142, and Thr188 each bind substrate; these read SGT, HPND, and SSN. His189 serves as the catalytic Proton donor/acceptor. Ser319 is a catalytic residue. Substrate is bound by residues Ser320 and 325-327; that span reads KVN.

Belongs to the class-II fumarase/aspartase family. Fumarase subfamily. Homotetramer.

Its subcellular location is the cytoplasm. It catalyses the reaction (S)-malate = fumarate + H2O. The protein operates within carbohydrate metabolism; tricarboxylic acid cycle; (S)-malate from fumarate: step 1/1. Involved in the TCA cycle. Catalyzes the stereospecific interconversion of fumarate to L-malate. In Thermosynechococcus vestitus (strain NIES-2133 / IAM M-273 / BP-1), this protein is Fumarate hydratase class II.